A 460-amino-acid chain; its full sequence is MTDVQCEPALAGRKPKWADADIAELVDERTGRLDPRIYTDEALYEQELERIFGRSWLLMGHETQIPKAGDFMTNYMGEDPVMVVRQKNGEIRVFLNQCRHRGMRICRADGGNAKSFTCSYHGWAYDTGGNLVSVPFEEQAFPGLRKEDWGPLQARVETYKGLIFANWDADAPDLDTYLGEAKFYMDHMLDRTEAGTEAIPGIQKWVIPCNWKFAAEQFCSDMYHAGTTSHLSGILAGLPDGVDLSELAPPTEGIQYRATWGGHGSGFYIGDPNLLLAIMGPKVTEYWTQGPAAEKASERLGSTERGQQLMAQHMTIFPTCSFLPGINTIRAWHPRGPNEIEVWAFTVVDADAPEEMKEEYRQQTLRTFSAGGVFEQDDGENWVEIQQVLRGHKARSRPFNAEMGLGQTDSDNPDYPGTISYVYSEEAARGLYTQWVRMMTSPDWAALDATRPAVSESTHT.

A Rieske domain is found at Trp-56 to Ala-165. Positions 98, 100, 118, and 121 each coordinate [2Fe-2S] cluster. Gln-217–His-230 is a substrate binding site. His-224, His-230, and Asp-378 together coordinate Fe cation.

Belongs to the bacterial ring-hydroxylating dioxygenase alpha subunit family. Heterohexamer consisting of three BphA1 subunits and three BphA2 subunits. The multicomponent biphenyl dioxygenase system is composed of a ferredoxin reductase (BphA4), a ferredoxin (BphA3), and a terminal oxygenase (BphA1A2). The cofactor is [2Fe-2S] cluster. Requires Fe cation as cofactor.

It catalyses the reaction biphenyl + NADH + O2 + H(+) = (2R,3S)-3-phenylcyclohexa-3,5-diene-1,2-diol + NAD(+). It functions in the pathway xenobiotic degradation; biphenyl degradation; 2-hydroxy-2,4-pentadienoate and benzoate from biphenyl: step 1/4. Its function is as follows. Part of the oxygenase component of the biphenyl dioxygenase system that catalyzes the stereospecific dihydroxylation of the aromatic ring of biphenyl, yielding a dihydrodiol compound. Is essential for biphenyl degradation and growth of Rhodococcus sp. strain RHA1 on biphenyl as the sole source of carbon and energy. Can also use naphtalene and 4-chlorobiphenyl (4-CB) as substrates, as well as some polychlorinated biphenyls (PCB) such as 2,2'-dichlorobiphenyl, 2,3-dichlorobiphenyl and 2,5,2'-trichlorobiphenyl. Exhibits weak activity toward dibenzofuran and dibenzo-p-dioxin. Electrons are transferred from NADH to the [2Fe-2S] cluster in BphA1 via FAD of BphA4 and [2Fe-2S] cluster of BphA3. This chain is Biphenyl 2,3-dioxygenase subunit alpha, found in Rhodococcus jostii (strain RHA1).